Consider the following 153-residue polypeptide: UPF0311 protein Rpal_1987 (153 aa).

The protein belongs to the UPF0311 family.

The protein is UPF0311 protein Rpal_1987 of Rhodopseudomonas palustris (strain TIE-1).